Consider the following 279-residue polypeptide: Energy-coupling factor transporter ATP-binding protein EcfA1 (279 aa).

An ABC transporter domain is found at 6-240; it reads VRLEHVFYKY…ADAMRAIGLG (235 aa). 40–47 serves as a coordination point for ATP; it reads GHNGSGKS.

Belongs to the ABC transporter superfamily. Energy-coupling factor EcfA family. As to quaternary structure, forms a stable energy-coupling factor (ECF) transporter complex composed of 2 membrane-embedded substrate-binding proteins (S component), 2 ATP-binding proteins (A component) and 2 transmembrane proteins (T component).

It localises to the cell membrane. ATP-binding (A) component of a common energy-coupling factor (ECF) ABC-transporter complex. Unlike classic ABC transporters this ECF transporter provides the energy necessary to transport a number of different substrates. The chain is Energy-coupling factor transporter ATP-binding protein EcfA1 from Listeria innocua serovar 6a (strain ATCC BAA-680 / CLIP 11262).